The sequence spans 92 residues: Kinetoplastid membrane protein 11C (92 aa).

Belongs to the KMP-11 family. As to quaternary structure, monomer.

The protein localises to the cytoplasm. The protein resides in the cytoskeleton. It is found in the cell projection. It localises to the cilium. Its subcellular location is the flagellum. May be involved in the regulation of the cytoskeleton through interaction with the subpellicular microtubules. May be involved in parasite mobility and attachment to the surface of the host cell. Behaves as a strong immunogen during infection. The protein is Kinetoplastid membrane protein 11C (KMP-11C) of Leishmania infantum.